Reading from the N-terminus, the 104-residue chain is Large ribosomal subunit protein bL21 (104 aa).

Belongs to the bacterial ribosomal protein bL21 family. As to quaternary structure, part of the 50S ribosomal subunit. Contacts protein L20.

Functionally, this protein binds to 23S rRNA in the presence of protein L20. This chain is Large ribosomal subunit protein bL21, found in Endomicrobium trichonymphae.